Here is a 179-residue protein sequence, read N- to C-terminus: MAKLHDKYQETVVAELAKKFGYTSVMQVPRIEKITLNMGVGEAVADKKIMDHAVRDMTAIAGQKPVVTVARKSVAGFKIREGYPIGCKVTLRGERMWEFLERLVDIAIPRIRDFRGLSAKAFDGRGNYAMGVREQIIFPEIDYDKIDKIRGMDIVITTTAKNDEEGRALLDAFNFPFKK.

This sequence belongs to the universal ribosomal protein uL5 family. In terms of assembly, part of the 50S ribosomal subunit; part of the 5S rRNA/L5/L18/L25 subcomplex. Contacts the 5S rRNA and the P site tRNA. Forms a bridge to the 30S subunit in the 70S ribosome.

This is one of the proteins that bind and probably mediate the attachment of the 5S RNA into the large ribosomal subunit, where it forms part of the central protuberance. In the 70S ribosome it contacts protein S13 of the 30S subunit (bridge B1b), connecting the 2 subunits; this bridge is implicated in subunit movement. Contacts the P site tRNA; the 5S rRNA and some of its associated proteins might help stabilize positioning of ribosome-bound tRNAs. This is Large ribosomal subunit protein uL5 from Shewanella baltica (strain OS223).